The following is a 670-amino-acid chain: Probable ATP-citrate synthase subunit 1 (670 aa).

The disordered stretch occupies residues 1–22; sequence MPSATTASTNGANGASASPAPG. ATP-binding positions include 257–277 and 308–334; these read LLRYQADPDCKILVLLGEVGG and FKTEVQFGHAGAFANSQLETAATKNKS. Glu-274 serves as a coordination point for Mg(2+). The active-site Tele-phosphohistidine intermediate is His-316. 335 to 345 is a binding site for CoA; it reads MREAGFYVPDT.

Belongs to the succinate/malate CoA ligase alpha subunit family. As to quaternary structure, composed of two subunits.

It localises to the cytoplasm. It catalyses the reaction oxaloacetate + acetyl-CoA + ADP + phosphate = citrate + ATP + CoA. Catalyzes the formation of cytosolic acetyl-CoA, which is mainly used for the biosynthesis of fatty acids and sterols. The sequence is that of Probable ATP-citrate synthase subunit 1 from Neurospora crassa (strain ATCC 24698 / 74-OR23-1A / CBS 708.71 / DSM 1257 / FGSC 987).